The chain runs to 446 residues: Methylenetetrahydrofolate--tRNA-(uracil-5-)-methyltransferase TrmFO (446 aa).

11–16 (GGGLAG) serves as a coordination point for FAD.

The protein belongs to the MnmG family. TrmFO subfamily. The cofactor is FAD.

The protein resides in the cytoplasm. It catalyses the reaction uridine(54) in tRNA + (6R)-5,10-methylene-5,6,7,8-tetrahydrofolate + NADH + H(+) = 5-methyluridine(54) in tRNA + (6S)-5,6,7,8-tetrahydrofolate + NAD(+). The catalysed reaction is uridine(54) in tRNA + (6R)-5,10-methylene-5,6,7,8-tetrahydrofolate + NADPH + H(+) = 5-methyluridine(54) in tRNA + (6S)-5,6,7,8-tetrahydrofolate + NADP(+). Its function is as follows. Catalyzes the folate-dependent formation of 5-methyl-uridine at position 54 (M-5-U54) in all tRNAs. The polypeptide is Methylenetetrahydrofolate--tRNA-(uracil-5-)-methyltransferase TrmFO (Oleidesulfovibrio alaskensis (strain ATCC BAA-1058 / DSM 17464 / G20) (Desulfovibrio alaskensis)).